A 138-amino-acid polypeptide reads, in one-letter code: Large ribosomal subunit protein mL54 (138 aa).

A mitochondrion-targeting transit peptide spans 1–16; that stretch reads MAARRLFGATGSWARW.

Belongs to the mitochondrion-specific ribosomal protein mL54 family. In terms of assembly, component of the mitochondrial ribosome large subunit (39S) which comprises a 16S rRNA and about 50 distinct proteins.

Its subcellular location is the mitochondrion. The chain is Large ribosomal subunit protein mL54 (MRPL54) from Bos taurus (Bovine).